The chain runs to 366 residues: Ferredoxin--NADP reductase (366 aa).

FAD-binding residues include aspartate 51, glutamine 59, tyrosine 64, valine 104, phenylalanine 139, aspartate 308, and threonine 349.

Belongs to the ferredoxin--NADP reductase type 2 family. As to quaternary structure, homodimer. FAD is required as a cofactor.

It carries out the reaction 2 reduced [2Fe-2S]-[ferredoxin] + NADP(+) + H(+) = 2 oxidized [2Fe-2S]-[ferredoxin] + NADPH. This is Ferredoxin--NADP reductase from Polaromonas sp. (strain JS666 / ATCC BAA-500).